Here is a 105-residue protein sequence, read N- to C-terminus: Prokineticin-1 (105 aa).

The N-terminal stretch at 1-19 is a signal peptide; sequence MRGAVHIFIMLLLATASDC. Intrachain disulfides connect C26-C38, C32-C50, C37-C78, C60-C86, and C80-C96.

Belongs to the AVIT (prokineticin) family. Highly expressed in liver and ovary and weakly expressed in testis and placenta. Expressed in mucosa and mesenchyme of embryonic gut during enteric nervous system development (at protein level). Predominantly expressed in kidney and liver. Also expressed in lung, ovary, placenta and testis. In fetal liver, is restricted to and highly expressed in hepatocytes. In adult kidney, expression is restricted to the endothelial tubule cells. In placenta, expressed throughout gestation.

It localises to the secreted. In terms of biological role, potently contracts gastrointestinal (GI) smooth muscle. Induces proliferation, migration and fenestration (the formation of membrane discontinuities) in capillary endothelial cells. Induces proliferation and differentiation, but not migration, of enteric neural crest cells. Directly influences neuroblastoma progression by promoting the proliferation and migration of neuroblastoma cells. Positively regulates PTGS2 expression and prostaglandin synthesis. May play a role in placentation. May play a role in normal and pathological testis angiogenesis. In Mus musculus (Mouse), this protein is Prokineticin-1.